Here is an 899-residue protein sequence, read N- to C-terminus: Probable dipeptidyl-aminopeptidase B (899 aa).

Disordered stretches follow at residues 1–37 (MARKDKDNGPEFVPLTNRSHRSSASFSSTDSLSSDGS) and 51–84 (KITRTQLPEENPYRDDDVELERGDNIFSRPTENS). Topologically, residues 1–91 (MARKDKDNGP…ENSKRNRGSR (91 aa)) are cytoplasmic. Residues 22-37 (SSASFSSTDSLSSDGS) are compositionally biased toward low complexity. A compositionally biased stretch (basic and acidic residues) spans 61–74 (NPYRDDDVELERGD). The chain crosses the membrane as a helical; Signal-anchor for type II membrane protein span at residues 92 to 112 (LIWVVGLLCLGGWILAFVLFW). Residues 113 to 899 (GRRNSELSSS…QQGNSVLPVT (787 aa)) lie on the Vacuolar side of the membrane. N-linked (GlcNAc...) asparagine glycosylation is found at Asn-149, Asn-194, Asn-347, Asn-409, Asn-513, Asn-638, and Asn-643. The active-site Charge relay system is Ser-752. N-linked (GlcNAc...) asparagine glycosylation is present at Asn-811. Catalysis depends on charge relay system residues Asp-829 and His-862.

The protein belongs to the peptidase S9B family.

It localises to the vacuole membrane. The enzyme catalyses Release of an N-terminal dipeptide, Xaa-Yaa-|-Zaa-, from a polypeptide, preferentially when Yaa is Pro, provided Zaa is neither Pro nor hydroxyproline.. Type IV dipeptidyl-peptidase which removes N-terminal dipeptides sequentially from polypeptides having unsubstituted N-termini provided that the penultimate residue is proline. This chain is Probable dipeptidyl-aminopeptidase B (dapB), found in Talaromyces marneffei (strain ATCC 18224 / CBS 334.59 / QM 7333) (Penicillium marneffei).